The following is a 77-amino-acid chain: U10-lycotoxin-Ls1d (77 aa).

The signal sequence occupies residues 1 to 20 (MKLIIFTGLFLFAIVSLIEA). Residues 21-26 (EEESGR) constitute a propeptide that is removed on maturation.

Belongs to the neurotoxin 19 (CSTX) family. 09 (U10-Lctx) subfamily. Post-translationally, contains 4 disulfide bonds. As to expression, expressed by the venom gland.

The protein resides in the secreted. The protein is U10-lycotoxin-Ls1d of Lycosa singoriensis (Wolf spider).